The following is a 145-amino-acid chain: Large ribosomal subunit protein uL13 (145 aa).

The protein belongs to the universal ribosomal protein uL13 family. In terms of assembly, part of the 50S ribosomal subunit.

Its function is as follows. This protein is one of the early assembly proteins of the 50S ribosomal subunit, although it is not seen to bind rRNA by itself. It is important during the early stages of 50S assembly. The sequence is that of Large ribosomal subunit protein uL13 from Bacillus licheniformis (strain ATCC 14580 / DSM 13 / JCM 2505 / CCUG 7422 / NBRC 12200 / NCIMB 9375 / NCTC 10341 / NRRL NRS-1264 / Gibson 46).